The primary structure comprises 126 residues: Ribosome-binding factor A (126 aa).

The protein belongs to the RbfA family. In terms of assembly, monomer. Binds 30S ribosomal subunits, but not 50S ribosomal subunits or 70S ribosomes.

The protein localises to the cytoplasm. In terms of biological role, one of several proteins that assist in the late maturation steps of the functional core of the 30S ribosomal subunit. Associates with free 30S ribosomal subunits (but not with 30S subunits that are part of 70S ribosomes or polysomes). Required for efficient processing of 16S rRNA. May interact with the 5'-terminal helix region of 16S rRNA. The chain is Ribosome-binding factor A from Thermosynechococcus vestitus (strain NIES-2133 / IAM M-273 / BP-1).